A 313-amino-acid polypeptide reads, in one-letter code: Small ribosomal subunit protein uS2 (313 aa).

Positions 228–256 (RQEDKAAEAQDKDAQDTEDNKGARPRGAE) are enriched in basic and acidic residues. A disordered region spans residues 228-313 (RQEDKAAEAQ…VSKAGDKPKK (86 aa)).

It belongs to the universal ribosomal protein uS2 family.

This Amoebophilus asiaticus (strain 5a2) protein is Small ribosomal subunit protein uS2.